A 696-amino-acid chain; its full sequence is Glycine--tRNA ligase beta subunit (696 aa).

The protein belongs to the class-II aminoacyl-tRNA synthetase family. In terms of assembly, tetramer of two alpha and two beta subunits.

It localises to the cytoplasm. It catalyses the reaction tRNA(Gly) + glycine + ATP = glycyl-tRNA(Gly) + AMP + diphosphate. The polypeptide is Glycine--tRNA ligase beta subunit (Nitratidesulfovibrio vulgaris (strain ATCC 29579 / DSM 644 / CCUG 34227 / NCIMB 8303 / VKM B-1760 / Hildenborough) (Desulfovibrio vulgaris)).